Consider the following 124-residue polypeptide: Bactoprenol-linked glucose translocase (124 aa).

4 consecutive transmembrane segments (helical) span residues 12–32 (FFSY…VFYA), 45–65 (NIVG…RCSF), 75–95 (FIFI…FDLL), and 96–116 (ALSP…LGYC).

The protein belongs to the GtrA family.

Its subcellular location is the cell membrane. Its pathway is bacterial outer membrane biogenesis; lipopolysaccharide biosynthesis. In terms of biological role, involved in O antigen modification. Involved in the translocation of bactoprenol-linked glucose across the cytoplasmic membrane. The polypeptide is Bactoprenol-linked glucose translocase (rfbI) (Shigella flexneri).